The sequence spans 176 residues: Peroxynitrite isomerase 1 (176 aa).

The interval Met-1 to Pro-23 is disordered. Low complexity predominate over residues Ser-8 to Ala-20. The GXWXGXG motif lies at Gly-37–Gly-43. Position 168 (His-168) interacts with heme b.

Belongs to the nitrobindin family. As to quaternary structure, homodimer. The cofactor is heme b.

It carries out the reaction peroxynitrite = nitrate. It participates in nitrogen metabolism. Heme-binding protein able to scavenge peroxynitrite and to protect free L-tyrosine against peroxynitrite-mediated nitration, by acting as a peroxynitrite isomerase that converts peroxynitrite to nitrate. Therefore, this protein likely plays a role in peroxynitrite sensing and in the detoxification of reactive nitrogen and oxygen species (RNS and ROS, respectively). Is able to bind nitric oxide (NO) in vitro, but may act as a sensor of peroxynitrite levels in vivo. This Rhodococcus jostii (strain RHA1) protein is Peroxynitrite isomerase 1.